The sequence spans 234 residues: NAD-dependent protein deacylase (234 aa).

One can recognise a Deacetylase sirtuin-type domain in the interval 1 to 234 (MKNLVILSGA…IEMASQEMLK (234 aa)). 9–28 (GAGISAESGIKTFRDAGGLW) serves as a coordination point for NAD(+). Residues Tyr53 and Arg56 each coordinate substrate. Position 86–89 (86–89 (QNVD)) interacts with NAD(+). His104 acts as the Proton acceptor in catalysis. NAD(+) is bound by residues 169 to 171 (GTS) and Met217.

This sequence belongs to the sirtuin family. Class III subfamily.

Its subcellular location is the cytoplasm. It carries out the reaction N(6)-acetyl-L-lysyl-[protein] + NAD(+) + H2O = 2''-O-acetyl-ADP-D-ribose + nicotinamide + L-lysyl-[protein]. The enzyme catalyses N(6)-succinyl-L-lysyl-[protein] + NAD(+) + H2O = 2''-O-succinyl-ADP-D-ribose + nicotinamide + L-lysyl-[protein]. Functionally, NAD-dependent lysine deacetylase and desuccinylase that specifically removes acetyl and succinyl groups on target proteins. Modulates the activities of several proteins which are inactive in their acylated form. This chain is NAD-dependent protein deacylase, found in Helicobacter pylori (strain J99 / ATCC 700824) (Campylobacter pylori J99).